The primary structure comprises 504 residues: Maturase K (504 aa).

This sequence belongs to the intron maturase 2 family. MatK subfamily.

The protein resides in the plastid. Its subcellular location is the chloroplast. In terms of biological role, usually encoded in the trnK tRNA gene intron. Probably assists in splicing its own and other chloroplast group II introns. The protein is Maturase K of Actinidia chinensis (Kiwi).